We begin with the raw amino-acid sequence, 270 residues long: DNA-directed RNA polymerase subunit Rpo3 (270 aa).

3 residues coordinate [3Fe-4S] cluster: C206, C209, and C212.

This sequence belongs to the archaeal Rpo3/eukaryotic RPB3 RNA polymerase subunit family. Part of the RNA polymerase complex. [3Fe-4S] cluster is required as a cofactor.

Its subcellular location is the cytoplasm. It carries out the reaction RNA(n) + a ribonucleoside 5'-triphosphate = RNA(n+1) + diphosphate. DNA-dependent RNA polymerase (RNAP) catalyzes the transcription of DNA into RNA using the four ribonucleoside triphosphates as substrates. This chain is DNA-directed RNA polymerase subunit Rpo3, found in Methanosphaera stadtmanae (strain ATCC 43021 / DSM 3091 / JCM 11832 / MCB-3).